The primary structure comprises 122 residues: Large ribosomal subunit protein uL14 (122 aa).

It belongs to the universal ribosomal protein uL14 family. Part of the 50S ribosomal subunit. Forms a cluster with proteins L3 and L19. In the 70S ribosome, L14 and L19 interact and together make contacts with the 16S rRNA in bridges B5 and B8.

Functionally, binds to 23S rRNA. Forms part of two intersubunit bridges in the 70S ribosome. The polypeptide is Large ribosomal subunit protein uL14 (Dechloromonas aromatica (strain RCB)).